A 260-amino-acid chain; its full sequence is FAS1 domain-containing protein SELMODRAFT_448915 (260 aa).

At 1–35 (MRRTGRSYKPLLSQLKDHHIPVHPSSRAERAMESR) the chain is on the cytoplasmic side. The chain crosses the membrane as a helical span at residues 36–58 (TLLVLLFVGVVTIVSSGLERAAA). The 140-residue stretch at 59-198 (QDDTDDGILP…IACHGIDRVL (140 aa)) folds into the FAS1 domain. Over 59–260 (QDDTDDGILP…SSASRYPVSE (202 aa)) the chain is Extracellular. N-linked (GlcNAc...) asparagine glycans are attached at residues Asn-118, Asn-169, Asn-176, Asn-201, Asn-236, and Asn-247. Residues 210–260 (PEASPPFGAEQASPAPEALPPGTRSPNNTANPSNRKSNSTRSSASRYPVSE) form a disordered region. The span at 233-254 (RSPNNTANPSNRKSNSTRSSAS) shows a compositional bias: polar residues.

Its subcellular location is the membrane. In Selaginella moellendorffii (Spikemoss), this protein is FAS1 domain-containing protein SELMODRAFT_448915.